Consider the following 716-residue polypeptide: Fusoxypene synthase (716 aa).

The sesterterpenoid synthase stretch occupies residues 4–328 (LSYQSRLIPP…WLSACSRQNT (325 aa)). Asp96 serves as a coordination point for Mg(2+). Asp96 contacts substrate. The segment at 187-190 (RMTN) is substrate. Position 231 (Asn231) interacts with substrate. The substrate stretch occupies residues 235–239 (SYERE). Positions 329–711 (WKTNCSIDGK…CLATLSMEGC (383 aa)) are geranylfarnesyl diphosphate synthase. Residues Lys422, Arg425, and His454 each coordinate isopentenyl diphosphate. Mg(2+) contacts are provided by Asp461 and Asp465. Arg470 lines the dimethylallyl diphosphate pocket. Arg471 is an isopentenyl diphosphate binding site. Residues Lys548, Thr549, Gln587, Asn594, and Lys602 each contribute to the dimethylallyl diphosphate site.

It in the N-terminal section; belongs to the terpene synthase family. In the C-terminal section; belongs to the FPP/GGPP synthase family.

The catalysed reaction is 4 isopentenyl diphosphate + dimethylallyl diphosphate = (2E,6E,10E,14E)-geranylfarnesyl diphosphate + 4 diphosphate. The enzyme catalyses (2E,6E,10E,14E)-geranylfarnesyl diphosphate = fusoxypene A + diphosphate. It carries out the reaction (2E,6E,10E,14E)-geranylfarnesyl diphosphate = fusoxypene B + diphosphate. It catalyses the reaction (2E,6E,10E,14E)-geranylfarnesyl diphosphate = fusoxypene C + diphosphate. The catalysed reaction is (2E,6E,10E,14E)-geranylfarnesyl diphosphate = (-)-astellatene + diphosphate. Bifunctional sesterterpenoid synthase that performs both prenyl transferase and terpene cyclase activity, converting isopentenyl diphosphate and dimethylallyl diphosphate into geranylfarnesyl diphosphate (GFPP) and then converting GFPP into the enantiomeric sesterterpenes with a 5-6-7-3-5 ring system fusoxypene A, fusoxypene B, fusoxypene C and (-)-astellatene. This Fusarium oxysporum (Fusarium vascular wilt) protein is Fusoxypene synthase.